The chain runs to 85 residues: U4-theraphotoxin-Hhn1d (85 aa).

Residues 1 to 22 form the signal peptide; it reads MKVTLIAILTCAAVLVLHTTAA. The propeptide occupies 23 to 48; it reads EELEAESQLMEVGMPDTELAAVDEER. Cystine bridges form between C52–C66, C56–C77, and C71–C82.

Belongs to the neurotoxin 12 (Hwtx-2) family. 02 (Hwtx-2) subfamily. In terms of tissue distribution, expressed by the venom gland.

The protein resides in the secreted. Functionally, postsynaptic neurotoxin. The polypeptide is U4-theraphotoxin-Hhn1d (Cyriopagopus hainanus (Chinese bird spider)).